The chain runs to 179 residues: uncharacterized protein (179 aa).

Residues 1–32 are disordered; it reads MELQGAQEDLGISLSSPRRNHETRPGSKAKGR.

This is an uncharacterized protein from Homo sapiens (Human).